Consider the following 772-residue polypeptide: TBC domain-containing protein C4G8.04 (772 aa).

A compositionally biased stretch (polar residues) spans 143 to 161 (SFFPSSQEPSIPENPSSLT). Disordered regions lie at residues 143–163 (SFFP…LTGE) and 275–294 (KFFR…TFVS). Residues 275-291 (KFFRSSPRCSTPSVSST) show a composition bias toward low complexity. Thr-395 carries the post-translational modification Phosphothreonine. The region spanning 504-693 (GVPLCYKAKV…RIFDMLFCDG (190 aa)) is the Rab-GAP TBC domain.

The protein is TBC domain-containing protein C4G8.04 of Schizosaccharomyces pombe (strain 972 / ATCC 24843) (Fission yeast).